The primary structure comprises 158 residues: Cyclic pyranopterin monophosphate synthase (158 aa).

Residues 73–75 (LCH) and 110–111 (ME) contribute to the substrate site. D125 is a catalytic residue.

It belongs to the MoaC family. In terms of assembly, homohexamer; trimer of dimers.

The catalysed reaction is (8S)-3',8-cyclo-7,8-dihydroguanosine 5'-triphosphate = cyclic pyranopterin phosphate + diphosphate. It participates in cofactor biosynthesis; molybdopterin biosynthesis. Functionally, catalyzes the conversion of (8S)-3',8-cyclo-7,8-dihydroguanosine 5'-triphosphate to cyclic pyranopterin monophosphate (cPMP). This is Cyclic pyranopterin monophosphate synthase from Azotobacter vinelandii (strain DJ / ATCC BAA-1303).